Here is a 219-residue protein sequence, read N- to C-terminus: N-(5'-phosphoribosyl)anthranilate isomerase (219 aa).

The protein belongs to the TrpF family.

The enzyme catalyses N-(5-phospho-beta-D-ribosyl)anthranilate = 1-(2-carboxyphenylamino)-1-deoxy-D-ribulose 5-phosphate. It functions in the pathway amino-acid biosynthesis; L-tryptophan biosynthesis; L-tryptophan from chorismate: step 3/5. The chain is N-(5'-phosphoribosyl)anthranilate isomerase from Bradyrhizobium sp. (strain ORS 278).